We begin with the raw amino-acid sequence, 810 residues long: Cell division control protein 48 homolog E (810 aa).

S2 carries the N-acetylserine modification. Residue S41 is modified to Phosphoserine. ATP is bound by residues 248 to 255 (GPPGSGKT) and 521 to 528 (GPPGCGKT).

The protein belongs to the AAA ATPase family.

The protein localises to the nucleus. Its subcellular location is the cytoplasm. It localises to the cytoskeleton. The protein resides in the phragmoplast. In terms of biological role, probably functions in cell division and growth processes. Interacts with certain SNAREs as part of specialized membrane fusion events where vesicles from the same organelle fuse (homotypic fusion). The polypeptide is Cell division control protein 48 homolog E (CDC48E) (Arabidopsis thaliana (Mouse-ear cress)).